An 812-amino-acid chain; its full sequence is Fibrous sheath CABYR-binding protein (812 aa).

Residues methionine 1–alanine 66 are disordered. Phosphoserine occurs at positions 25, 57, 125, 133, 184, and 273. Disordered stretches follow at residues isoleucine 269–threonine 333, aspartate 367–serine 388, phenylalanine 424–leucine 547, and proline 672–lysine 741. Over residues alanine 275–lysine 286 the composition is skewed to low complexity. Positions glutamate 488–proline 501 are enriched in pro residues. Positions valine 502–proline 513 are enriched in low complexity. Acidic residues predominate over residues glutamate 514–glutamate 528.

As to quaternary structure, interacts with CABYR.

Its subcellular location is the cell projection. It localises to the cilium. The protein resides in the flagellum. Functionally, may be involved in the later stages of fibrous sheath biogenesis. Binds calcium. This chain is Fibrous sheath CABYR-binding protein, found in Rattus norvegicus (Rat).